The chain runs to 432 residues: Transcription factor E2F1 (432 aa).

Disordered regions lie at residues 39–85 (DVGA…GRPP) and 98–126 (YLAG…KSRY). Positions 65-106 (ATPQAPRPAPSAPRPALGRPPVKRRLDLETDHQYLAGSSGPF) are cyclin A:CDK2 binding. The segment at 87 to 189 (KRRLDLETDH…KKSKNHIQWL (103 aa)) is interaction with BIRC2/c-IAP1. A DNA-binding region spans residues 108–192 (GRGRHPGKGV…KNHIQWLGSR (85 aa)). N6-acetyllysine is present on residues Lys-115, Lys-118, and Lys-123. Residues 151 to 172 (LNWAAEVLKVQKRRIYDITNVL) form a leucine-zipper region. Residues 156–192 (EVLKVQKRRIYDITNVLEGIQLIAKKSKNHIQWLGSR) carry the DEF box motif. The residue at position 183 (Lys-183) is an N6-methyllysine; by SETD7. The segment at 190 to 377 (GSRTMVGIGQ…RLSPLVAADS (188 aa)) is required for interaction with TRIM28. Residues 193–282 (TMVGIGQRLE…AVDSAETFQI (90 aa)) form a dimerization region. Residues 297 to 342 (PEESAEGISPGRTSYQETSGEDRNADSGTAGPPPSPPSTSPTLDPS) are disordered. The transactivation stretch occupies residues 363-432 (PMEEDRLSPL…DFGDLTPLDF (70 aa)). Phosphoserine occurs at positions 370 and 398. The RB1 binding stretch occupies residues 404 to 421 (VDYHFGLEEGEGIRDLFD). The residue at position 428 (Thr-428) is a Phosphothreonine.

It belongs to the E2F/DP family. Component of the DRTF1/E2F transcription factor complex. Forms heterodimers with DP family members. The E2F1 complex binds specifically hypophosphorylated RB1, the interaction represses E2F1-driven transcription. During the cell cycle, RB1 becomes phosphorylated in mid-to-late G1 phase, detaches from the DRTF1/E2F complex, rendering E2F transcriptionally active. Interacts with TRRAP, which probably mediates its interaction with histone acetyltransferase complexes, leading to transcription activation. Binds TOPBP1 and EAPP. Interacts with ARID3A. Interacts with TRIM28; the interaction inhibits E2F1 acetylation through recruiting HDAC1 and represses its transcriptional activity. Interaction with KAT2B; the interaction acetylates E2F1 enhancing its DNA-binding and transcriptional activity. Interacts with BIRC2/c-IAP1 (via BIR domains). The complex TFDP1:E2F1 interacts with CEBPA; the interaction prevents CEBPA binding to target genes promoters and represses its transcriptional activity. Interacts with RRP1B. Interacts with HCFC1. Interacts with KMT2E; the interaction is probably indirect and is mediated via HCFC1. Interacts with DCAF5 and L3MBTL3; the interaction requires methylation at Lys-183 and is necessary to target E2F1 for ubiquitination by the CRL4-DCAF5 E3 ubiquitin ligase complex. In terms of processing, phosphorylated by CDK2 and cyclin A-CDK2 in the S-phase. Phosphorylation by CHEK2 stabilizes E2F1 upon DNA damage and regulates its effect on transcription and apoptosis. Phosphorylation at Ser-398 by GSK3B promotes interaction with USP11, leading to its deubiquitination and stabilization. Ubiquitinated via 'Lys-63'-linked ubiquitin, leading to its degradation. Deubiquitinated by USP11 following phosphorylation by GSK3B, promoting its stability. Post-translationally, acetylation stimulates DNA-binding. Enhanced under stress conditions such as DNA damage and inhibited by retinoblastoma protein RB1. Regulated by KAP1/TRIM28 which recruits HDAC1 to E2F1 resulting in deacetylation. In terms of processing, methylation at Lys-183 by SETD7 promotes E2F1 ubiquitin-dependent proteasomal degradation.

The protein resides in the nucleus. BIRC2/c-IAP1 stimulates its transcriptional activity. Functionally, transcription activator that binds DNA cooperatively with DP proteins through the E2 recognition site, 5'-TTTC[CG]CGC-3' found in the promoter region of a number of genes whose products are involved in cell cycle regulation or in DNA replication. The DRTF1/E2F complex functions in the control of cell-cycle progression from G1 to S phase. E2F1 binds preferentially RB1 in a cell-cycle dependent manner. It can mediate both cell proliferation and TP53/p53-dependent apoptosis. Blocks adipocyte differentiation by binding to specific promoters repressing CEBPA binding to its target gene promoters. Directly activates transcription of PEG10. Positively regulates transcription of RRP1B. In Rattus norvegicus (Rat), this protein is Transcription factor E2F1.